Reading from the N-terminus, the 467-residue chain is Venom prothrombin activator omicarin-C catalytic subunit (467 aa).

A signal peptide spans 1–20 (MAPQLLLCLILTFLWSLPEA). A propeptide spanning residues 21–40 (ESNVFLKSKVANRFLQRTKR) is cleaved from the precursor. A Gla domain is found at 41–86 (ANSLFEEFRSGNIERECIEERCSKEEAREVFEDDEKTETFWNVYVD). Glutamate 46, glutamate 47, glutamate 54, glutamate 56, glutamate 59, glutamate 60, glutamate 65, glutamate 66, glutamate 69, glutamate 72, and glutamate 75 each carry 4-carboxyglutamate. A disulfide bond links cysteine 57 and cysteine 62. The region spanning 86–122 (DGDQCSSNPCHYRGTCKDGIGSYTCTCLFGYEGKNCE) is the EGF-like 1; calcium-binding domain. 11 disulfide bridges follow: cysteine 90–cysteine 101, cysteine 95–cysteine 110, cysteine 112–cysteine 121, cysteine 129–cysteine 140, cysteine 136–cysteine 149, cysteine 151–cysteine 164, cysteine 172–cysteine 329, cysteine 216–cysteine 221, cysteine 236–cysteine 252, cysteine 377–cysteine 391, and cysteine 402–cysteine 430. Residue serine 92 is glycosylated (O-linked (Hex...) serine). Residues 129 to 164 (CRVDNGNCWHFCKPVQNDIQCSCAEGYLLGEDGHSC) enclose the EGF-like 2 domain. The propeptide at 182–209 (REASLPDFVQSQNATLLKKSDNPSPDIR) is activation peptide. A Peptidase S1 domain is found at 210 to 454 (IVNGMDCKLG…FILWIKRIMR (245 aa)). The Charge relay system role is filled by histidine 251. Asparagine 254 carries N-linked (GlcNAc...) asparagine glycosylation. Catalysis depends on aspartate 309, which acts as the Charge relay system. Serine 406 serves as the catalytic Charge relay system.

Belongs to the peptidase S1 family. Snake venom subfamily. In terms of assembly, heterodimer of a light and a heavy chains; disulfide-linked. Is associated with omicarin-C non-catalytic subunit (AC Q58L90) in a non-covalent manner. Gamma-carboxyglutamate residues are formed by vitamin K dependent carboxylation. These residues are essential for the binding of calcium. Expressed by the venom gland.

Its subcellular location is the secreted. The catalysed reaction is Selective cleavage of Arg-|-Thr and then Arg-|-Ile bonds in prothrombin to form thrombin.. Activated by calcium and negatively charged phospholipids. Functionally, snake prothrombin activator that attacks the hemostatic system of prey. This catalytic subunit is functionally similar to blood coagulation factor Xa. It requires a non-catalytic subunit present in the venom, which is similar to coagulation factor Va, to be fully active. The protein is Venom prothrombin activator omicarin-C catalytic subunit of Oxyuranus microlepidotus (Inland taipan).